The sequence spans 324 residues: Pseudouridylate synthase RPUSD4, mitochondrial (324 aa).

The N-terminal 11 residues, 1 to 11 (MAAAGGGATRG), are a transit peptide targeting the mitochondrion. D105 is an active-site residue.

The protein belongs to the pseudouridine synthase RluA family.

The protein localises to the mitochondrion matrix. It is found in the nucleus. It localises to the cytoplasm. The catalysed reaction is uridine in 5S rRNA = pseudouridine in 5S rRNA. It catalyses the reaction a uridine in tRNA = a pseudouridine in tRNA. It carries out the reaction a uridine in mRNA = a pseudouridine in mRNA. Catalyzes uridine to pseudouridine isomerization (pseudouridylation) of different mitochondrial RNA substrates. Acts on position 1397 in 16S mitochondrial ribosomal RNA (16S mt-rRNA). This modification is required for the assembly of 16S mt-rRNA into a functional mitochondrial ribosome. Acts on position 39 in mitochondrial tRNA(Phe). Also catalyzes pseudouridylation of mRNAs in nucleus: acts as a regulator of pre-mRNA splicing by mediating pseudouridylation of pre-mRNAs at locations associated with alternatively spliced regions. Pseudouridylation of pre-mRNAs near splice sites directly regulates mRNA splicing and mRNA 3'-end processing. The sequence is that of Pseudouridylate synthase RPUSD4, mitochondrial from Xenopus tropicalis (Western clawed frog).